The sequence spans 316 residues: Transcription termination/antitermination protein NusG (316 aa).

It belongs to the NusG family.

In terms of biological role, participates in transcription elongation, termination and antitermination. The chain is Transcription termination/antitermination protein NusG from Mycoplasma genitalium (strain ATCC 33530 / DSM 19775 / NCTC 10195 / G37) (Mycoplasmoides genitalium).